The sequence spans 101 residues: NADH-quinone oxidoreductase subunit K (101 aa).

The next 3 helical transmembrane spans lie at 4-24 (LAHY…GIFL), 29-49 (IIII…NFVA), and 61-81 (IFVF…LAIL).

This sequence belongs to the complex I subunit 4L family. In terms of assembly, NDH-1 is composed of 14 different subunits. Subunits NuoA, H, J, K, L, M, N constitute the membrane sector of the complex.

It is found in the cell inner membrane. It catalyses the reaction a quinone + NADH + 5 H(+)(in) = a quinol + NAD(+) + 4 H(+)(out). Functionally, NDH-1 shuttles electrons from NADH, via FMN and iron-sulfur (Fe-S) centers, to quinones in the respiratory chain. The immediate electron acceptor for the enzyme in this species is believed to be ubiquinone. Couples the redox reaction to proton translocation (for every two electrons transferred, four hydrogen ions are translocated across the cytoplasmic membrane), and thus conserves the redox energy in a proton gradient. The chain is NADH-quinone oxidoreductase subunit K from Burkholderia vietnamiensis (strain G4 / LMG 22486) (Burkholderia cepacia (strain R1808)).